Consider the following 206-residue polypeptide: Flavin reductase (NADPH) (206 aa).

Residues G10, T12, G13, T15, R35, S38, and R39 each coordinate NADP(+). S42 bears the Phosphoserine mark. Residues D54, V55, L75, and G76 each coordinate NADP(+). S82 is modified (phosphoserine). M87, C109, H132, H153, and I154 together coordinate NADP(+). C109 functions as the S-nitroso-cysteine intermediate; for S-nitroso-CoA-dependent nitrosyltransferase activity in the catalytic mechanism. C188 serves as the catalytic S-nitroso-cysteine intermediate; for S-nitroso-CoA-dependent nitrosyltransferase activity.

Belongs to the BLVRB family. As to quaternary structure, monomer.

Its subcellular location is the cytoplasm. It carries out the reaction reduced riboflavin + NADP(+) = riboflavin + NADPH + 2 H(+). It catalyses the reaction bilirubin IXbeta + NADP(+) = biliverdin IXbeta + NADPH + H(+). The enzyme catalyses FMNH2 + NAD(+) = FMN + NADH + 2 H(+). The catalysed reaction is FMNH2 + NADP(+) = FMN + NADPH + 2 H(+). It carries out the reaction S-nitroso-CoA + L-cysteinyl-[protein] = S-nitroso-L-cysteinyl-[protein] + CoA. It catalyses the reaction L-cysteinyl-[SCAN] + S-nitroso-CoA = S-nitroso-L-cysteinyl-[SCAN] + CoA. The enzyme catalyses S-nitroso-L-cysteinyl-[SCAN] + L-cysteinyl-[protein] = L-cysteinyl-[SCAN] + S-nitroso-L-cysteinyl-[protein]. Enzyme that can both act as a NAD(P)H-dependent reductase and a S-nitroso-CoA-dependent nitrosyltransferase. Promotes fetal heme degradation during development. Also expressed in adult tissues, where it acts as a regulator of hematopoiesis, intermediary metabolism (glutaminolysis, glycolysis, TCA cycle and pentose phosphate pathway) and insulin signaling. Has a broad specificity oxidoreductase activity by catalyzing the NAD(P)H-dependent reduction of a variety of flavins, such as riboflavin, FAD or FMN, biliverdins, methemoglobin and PQQ (pyrroloquinoline quinone). Contributes to fetal heme catabolism by catalyzing reduction of biliverdin IXbeta into bilirubin IXbeta in the liver. Biliverdin IXbeta, which constitutes the major heme catabolite in the fetus is not present in adult. Does not reduce bilirubin IXalpha. Can also reduce the complexed Fe(3+) iron to Fe(2+) in the presence of FMN and NADPH. Acts as a protein nitrosyltransferase by catalyzing nitrosylation of cysteine residues of target proteins, such as HMOX2, INSR and IRS1. S-nitroso-CoA-dependent nitrosyltransferase activity is mediated via a 'ping-pong' mechanism: BLVRB first associates with both S-nitroso-CoA and protein substrate, nitric oxide group is then transferred from S-nitroso-CoA to Cys-109 and Cys-188 residues of BLVRB and from S-nitroso-BLVRB to the protein substrate. Inhibits insulin signaling by mediating nitrosylation of INSR and IRS1, leading to their inhibition. This is Flavin reductase (NADPH) (Blvrb) from Mus musculus (Mouse).